The chain runs to 222 residues: N-(5'-phosphoribosyl)anthranilate isomerase (222 aa).

Belongs to the TrpF family.

The catalysed reaction is N-(5-phospho-beta-D-ribosyl)anthranilate = 1-(2-carboxyphenylamino)-1-deoxy-D-ribulose 5-phosphate. It participates in amino-acid biosynthesis; L-tryptophan biosynthesis; L-tryptophan from chorismate: step 3/5. The chain is N-(5'-phosphoribosyl)anthranilate isomerase from Xanthomonas campestris pv. campestris (strain 8004).